Here is an 88-residue protein sequence, read N- to C-terminus: Large ribosomal subunit protein bL27 (88 aa).

The interval 1-25 (MAHKKAGGSSRNGRDSPGQRRGIKR) is disordered.

This sequence belongs to the bacterial ribosomal protein bL27 family.

This chain is Large ribosomal subunit protein bL27 (rpmA), found in Lawsonia intracellularis.